A 156-amino-acid polypeptide reads, in one-letter code: Small ribosomal subunit protein uS7 (156 aa).

This sequence belongs to the universal ribosomal protein uS7 family. Part of the 30S ribosomal subunit. Contacts proteins S9 and S11.

Its function is as follows. One of the primary rRNA binding proteins, it binds directly to 16S rRNA where it nucleates assembly of the head domain of the 30S subunit. Is located at the subunit interface close to the decoding center, probably blocks exit of the E-site tRNA. This Lacticaseibacillus casei (strain BL23) (Lactobacillus casei) protein is Small ribosomal subunit protein uS7.